Here is a 96-residue protein sequence, read N- to C-terminus: ESAT-6-like protein EsxR (96 aa).

The protein belongs to the WXG100 family. ESAT-6 subfamily.

The protein localises to the secreted. The protein is ESAT-6-like protein EsxR of Mycobacterium bovis (strain ATCC BAA-935 / AF2122/97).